The sequence spans 139 residues: Putative pre-16S rRNA nuclease (139 aa).

The protein belongs to the YqgF nuclease family.

The protein resides in the cytoplasm. Its function is as follows. Could be a nuclease involved in processing of the 5'-end of pre-16S rRNA. The protein is Putative pre-16S rRNA nuclease of Streptococcus uberis (strain ATCC BAA-854 / 0140J).